The sequence spans 90 residues: Small ribosomal subunit protein bS18 (90 aa).

This sequence belongs to the bacterial ribosomal protein bS18 family. In terms of assembly, part of the 30S ribosomal subunit. Forms a tight heterodimer with protein bS6.

Its function is as follows. Binds as a heterodimer with protein bS6 to the central domain of the 16S rRNA, where it helps stabilize the platform of the 30S subunit. The protein is Small ribosomal subunit protein bS18 of Porphyromonas gingivalis (strain ATCC 33277 / DSM 20709 / CIP 103683 / JCM 12257 / NCTC 11834 / 2561).